Here is a 97-residue protein sequence, read N- to C-terminus: Large ribosomal subunit protein eL21 (97 aa).

A disordered region spans residues 1 to 26 (MQKSEGFRSKTRYKLQKHPRQKGMAP). A compositionally biased stretch (basic residues) spans 9-21 (SKTRYKLQKHPRQ).

This sequence belongs to the eukaryotic ribosomal protein eL21 family.

This chain is Large ribosomal subunit protein eL21, found in Methanococcus maripaludis (strain C6 / ATCC BAA-1332).